Consider the following 306-residue polypeptide: MSSVDQIVKTFAKLPEGERNAAVNAILAMMPPGPGPVRQIPEPVSQAPAPKKKVNGFMGFRSYYSPLFSQFPQKARSPFMTILWQHDPFHNEWDFMCSVYSSIRNYLEQSNAQREKKITLQYWLHFAVPVMGVLGRENYLPTLGWDLVTMPNGTIDLMRIAMPLFRKNLQPMNGLCLFTKCQEGGLQVDNQHLVIAKLSDPSYDMIWFNKRPHYQQRHAVQADSSELGVSALFPRNHAVAAEADDVATLQLPHWMQQGDFGTESGYSPQFETLLGSILENGNATSNDSYNMALAMDVPMMGFNGGA.

The segment at residues 49 to 104 is a DNA-binding region (alpha box); it reads APKKKVNGFMGFRSYYSPLFSQFPQKARSPFMTILWQHDPFHNEWDFMCSVYSSIR.

The protein belongs to the MATALPHA1 family.

The protein resides in the nucleus. Its function is as follows. Mating type proteins are sequence specific DNA-binding proteins that act as master switches in fungal differentiation by controlling gene expression in a cell type-specific fashion. Transcriptional activator that induces the transcription of alpha-specific genes. The polypeptide is Mating type protein SmtA-1 (SMTA1) (Sordaria macrospora (strain ATCC MYA-333 / DSM 997 / K(L3346) / K-hell)).